The primary structure comprises 240 residues: MSAPLSLFVTGTDTEIGKTFVSTALLHGFARAGLRAAAMKPIAAGAYQRDGVWRNEDADQLDAAANVALPATIRTPFLLKAAAAPHIAAAREGVALDIDTIVGAHRRACERADVVVVEGVGGFRVPLAGTRDTADLAVALGLPVVLVVGVRLGCISHALLTADAIAARGLAIAGWVANRVDAAMRFADDNVDTLRAWLEREHGAPLLGDIAHMSPPSPEAASRSLDVNRLLGALRETAPR.

15-20 serves as a coordination point for ATP; sequence EIGKTF. Threonine 19 is a Mg(2+) binding site. Lysine 40 is an active-site residue. Residues aspartate 57, 118–121, and 178–179 contribute to the ATP site; these read EGVG and NR. Aspartate 57 and glutamate 118 together coordinate Mg(2+).

It belongs to the dethiobiotin synthetase family. In terms of assembly, homodimer. The cofactor is Mg(2+).

Its subcellular location is the cytoplasm. It carries out the reaction (7R,8S)-7,8-diammoniononanoate + CO2 + ATP = (4R,5S)-dethiobiotin + ADP + phosphate + 3 H(+). The protein operates within cofactor biosynthesis; biotin biosynthesis; biotin from 7,8-diaminononanoate: step 1/2. Its function is as follows. Catalyzes a mechanistically unusual reaction, the ATP-dependent insertion of CO2 between the N7 and N8 nitrogen atoms of 7,8-diaminopelargonic acid (DAPA, also called 7,8-diammoniononanoate) to form a ureido ring. The chain is ATP-dependent dethiobiotin synthetase BioD from Burkholderia thailandensis (strain ATCC 700388 / DSM 13276 / CCUG 48851 / CIP 106301 / E264).